A 766-amino-acid polypeptide reads, in one-letter code: Nitrogen permease regulator 3 (766 aa).

The signal sequence occupies residues 1–23 (MSSVVRPPDPCLVAIILITCSRA). Disordered regions lie at residues 33-140 (PNPS…WDSF), 186-257 (RKKR…VTDG), and 594-638 (EEAK…NATP). Positions 36–49 (SIASAPSRSNSRTK) are enriched in polar residues. Residues 51 to 61 (SPRASDSSPSS) show a composition bias toward low complexity. Residues 62 to 74 (DNEEGSSSDEDDL) are compositionally biased toward acidic residues. The span at 89 to 110 (RRLSSGSPSTKAASQQRKSNLG) shows a compositional bias: polar residues. Composition is skewed to basic and acidic residues over residues 118-133 (ETPR…HELE) and 217-250 (GGEK…HPDE).

Belongs to the NPR3 family.

Mediates inactivation of the TORC1 complex in response to amino acid starvation. Required for meiotic nuclear division. The chain is Nitrogen permease regulator 3 (NPR3) from Coccidioides immitis (strain RS) (Valley fever fungus).